We begin with the raw amino-acid sequence, 348 residues long: Major outer membrane protein P.IB (348 aa).

Residues 1-19 (MKKSLIALTLAALPVAAMA) form the signal peptide.

Belongs to the Gram-negative porin family. Homotrimer.

The protein localises to the cell outer membrane. Functionally, serves as a slightly cation selective porin. Major antigen on the gonococcal cell surface and it may have pathogenic properties in addition to its porin activity. This chain is Major outer membrane protein P.IB (porB), found in Neisseria gonorrhoeae.